The following is a 94-amino-acid chain: Acylphosphatase (94 aa).

One can recognise an Acylphosphatase-like domain in the interval 7–94 (RLTARITGVV…GEFDDFRIID (88 aa)). Catalysis depends on residues R22 and N40.

It belongs to the acylphosphatase family.

The enzyme catalyses an acyl phosphate + H2O = a carboxylate + phosphate + H(+). This Paenarthrobacter aurescens (strain TC1) protein is Acylphosphatase (acyP).